An 810-amino-acid polypeptide reads, in one-letter code: RING finger protein unkempt homolog (810 aa).

The segment at 1–24 is disordered; that stretch reads MSKGPGPGGSAASSAPPAATAQVL. Residues 10 to 19 show a composition bias toward low complexity; sequence SAASSAPPAA. C3H1-type zinc fingers lie at residues 84 to 113, 124 to 154, 215 to 241, 251 to 285, and 293 to 321; these read YSPD…HRTT, YYKT…HGPH, NYKT…HNSK, KYRS…HTRT, and IYKS…HVEQ. Residues 239-265 are disordered; it reads NSKDRRRSPRKHKYRSSPCPNVKHGDE. Ser-240 carries the post-translational modification Phosphoserine. Residues 241–253 show a composition bias toward basic residues; it reads KDRRRSPRKHKYR. Positions 324 to 343 are disordered; that stretch reads LSDDLQPSSTVSSPTQPGPV. A compositionally biased stretch (low complexity) spans 329–343; that stretch reads QPSSTVSSPTQPGPV. Phosphoserine is present on residues Ser-374, Ser-378, and Ser-385. The segment covering 569–585 has biased composition (low complexity); that stretch reads SASFHSASPSPPVSLSS. A disordered region spans residues 569-602; sequence SASFHSASPSPPVSLSSHFLQQPQGHLSQSENTF. The segment covering 586–602 has biased composition (polar residues); it reads HFLQQPQGHLSQSENTF. Ser-631 bears the Phosphoserine mark. Positions 643 to 723 form a coiled coil; it reads GAAELARLRQ…QEELERLHSG (81 aa). The RING-type; degenerate zinc-finger motif lies at 766–801; it reads SVKCLKCQEQNRAVLPCQHAVLCELCAEGSECPVCQ.

The protein belongs to the unkempt family.

It is found in the cytoplasm. In terms of biological role, sequence-specific RNA-binding protein which plays an important role in the establishment and maintenance of the early morphology of cortical neurons during embryonic development. Acts as a translation repressor and controls a translationally regulated cell morphology program to ensure proper structuring of the nervous system. Translational control depends on recognition of its binding element within target mRNAs which consists of a mandatory UAG trimer upstream of a U/A-rich motif. Associated with polysomes. This is RING finger protein unkempt homolog (UNK) from Canis lupus familiaris (Dog).